The primary structure comprises 61 residues: Large ribosomal subunit protein bL32 (61 aa).

A disordered region spans residues 1 to 22 (MAVPKQKSSKSRGRKRRTHQKV). A compositionally biased stretch (basic residues) spans 7-20 (KSSKSRGRKRRTHQ).

It belongs to the bacterial ribosomal protein bL32 family.

The sequence is that of Large ribosomal subunit protein bL32 from Desulforapulum autotrophicum (strain ATCC 43914 / DSM 3382 / VKM B-1955 / HRM2) (Desulfobacterium autotrophicum).